We begin with the raw amino-acid sequence, 172 residues long: Adenine phosphoribosyltransferase (172 aa).

The protein belongs to the purine/pyrimidine phosphoribosyltransferase family. As to quaternary structure, homodimer.

The protein resides in the cytoplasm. The catalysed reaction is AMP + diphosphate = 5-phospho-alpha-D-ribose 1-diphosphate + adenine. Its pathway is purine metabolism; AMP biosynthesis via salvage pathway; AMP from adenine: step 1/1. Its function is as follows. Catalyzes a salvage reaction resulting in the formation of AMP, that is energically less costly than de novo synthesis. The protein is Adenine phosphoribosyltransferase of Clostridium kluyveri (strain NBRC 12016).